The sequence spans 891 residues: Aconitate hydratase A (891 aa).

Positions 435, 501, and 504 each coordinate [4Fe-4S] cluster.

The protein belongs to the aconitase/IPM isomerase family. In terms of assembly, monomer. [4Fe-4S] cluster is required as a cofactor.

It catalyses the reaction citrate = D-threo-isocitrate. The enzyme catalyses (2S,3R)-3-hydroxybutane-1,2,3-tricarboxylate = 2-methyl-cis-aconitate + H2O. The protein operates within carbohydrate metabolism; tricarboxylic acid cycle; isocitrate from oxaloacetate: step 2/2. It participates in organic acid metabolism; propanoate degradation. Functionally, involved in the catabolism of short chain fatty acids (SCFA) via the tricarboxylic acid (TCA)(acetyl degradation route) and the 2-methylcitrate cycle I (propionate degradation route). Catalyzes the reversible isomerization of citrate to isocitrate via cis-aconitate. Also catalyzes the hydration of 2-methyl-cis-aconitate to yield (2R,3S)-2-methylisocitrate. The (2S,3S)-2-methylcitrate (2-MC) is a very poor substrate. The apo form of AcnA functions as a RNA-binding regulatory protein. This is Aconitate hydratase A (acnA) from Salmonella typhimurium (strain LT2 / SGSC1412 / ATCC 700720).